The chain runs to 112 residues: Large ribosomal subunit protein uL22 (112 aa).

It belongs to the universal ribosomal protein uL22 family. In terms of assembly, part of the 50S ribosomal subunit.

Its function is as follows. This protein binds specifically to 23S rRNA; its binding is stimulated by other ribosomal proteins, e.g. L4, L17, and L20. It is important during the early stages of 50S assembly. It makes multiple contacts with different domains of the 23S rRNA in the assembled 50S subunit and ribosome. In terms of biological role, the globular domain of the protein is located near the polypeptide exit tunnel on the outside of the subunit, while an extended beta-hairpin is found that lines the wall of the exit tunnel in the center of the 70S ribosome. The sequence is that of Large ribosomal subunit protein uL22 from Anaplasma marginale (strain Florida).